Reading from the N-terminus, the 436-residue chain is Ribulose bisphosphate carboxylase large chain (436 aa).

Substrate-binding residues include Asn104 and Thr154. The active-site Proton acceptor is the Lys156. Residue Lys158 coordinates substrate. Mg(2+) is bound by residues Lys182, Asp184, and Glu185. Position 182 is an N6-carboxylysine (Lys182). His275 serves as the catalytic Proton acceptor. Substrate is bound by residues Arg276, His308, and Ser360.

This sequence belongs to the RuBisCO large chain family. Type I subfamily. As to quaternary structure, heterohexadecamer of 8 large chains and 8 small chains. Mg(2+) is required as a cofactor.

The protein localises to the plastid. The protein resides in the chloroplast. The catalysed reaction is 2 (2R)-3-phosphoglycerate + 2 H(+) = D-ribulose 1,5-bisphosphate + CO2 + H2O. It carries out the reaction D-ribulose 1,5-bisphosphate + O2 = 2-phosphoglycolate + (2R)-3-phosphoglycerate + 2 H(+). Its function is as follows. RuBisCO catalyzes two reactions: the carboxylation of D-ribulose 1,5-bisphosphate, the primary event in carbon dioxide fixation, as well as the oxidative fragmentation of the pentose substrate in the photorespiration process. Both reactions occur simultaneously and in competition at the same active site. This Euglena myxocylindracea protein is Ribulose bisphosphate carboxylase large chain.